We begin with the raw amino-acid sequence, 186 residues long: MTTAFDIADIKRRMAGAVTSLKQELGGLRTGRASASLLEPITVDAYGANMPLAQVATVSVPEPRLLSVQVWDRGMVNAVEKAIRDSNLGLNPNTEGQTLRIRIPELNEERRKELVKVAHKYAEAARVAVRHVRRDGMDLLKKLEKDSAISSDDMERLSKDVQKATDETISEVDQTLAHKEKEILSV.

This sequence belongs to the RRF family.

Its subcellular location is the cytoplasm. Its function is as follows. Responsible for the release of ribosomes from messenger RNA at the termination of protein biosynthesis. May increase the efficiency of translation by recycling ribosomes from one round of translation to another. This is Ribosome-recycling factor from Azorhizobium caulinodans (strain ATCC 43989 / DSM 5975 / JCM 20966 / LMG 6465 / NBRC 14845 / NCIMB 13405 / ORS 571).